A 655-amino-acid chain; its full sequence is Import motor subunit, mitochondrial (655 aa).

Residues 1–23 (MLAAKNILNRSSLSSSFRIATRL) constitute a mitochondrion transit peptide. A Phosphothreonine modification is found at threonine 330. Residues 629-655 (EQLYKNDSNNNNNNNNGNNAESDETKQ) form a disordered region. A compositionally biased stretch (low complexity) spans 637–647 (NNNNNNNNGNN).

The protein belongs to the heat shock protein 70 family. In terms of assembly, component of the PAM complex, at least composed of SSC1 (mtHsp70), MGE1, TIM44, PAM16/TIM16, PAM17 and PAM18/TIM14. In the complex, SSC1 interacts directly with PAM18 and TIM44. Interacts with NAP1. Component of endonuclease SceI (endo.SceI), which is a heterodimer of ENS2 and SSC1.

Its subcellular location is the mitochondrion matrix. It carries out the reaction ATP + H2O = ADP + phosphate + H(+). Its function is as follows. Essential component of the PAM complex, a complex required for the translocation of transit peptide-containing proteins from the inner membrane into the mitochondrial matrix in an ATP-dependent manner. Constitutes the ATP-driven core of the motor and binds the precursor preprotein. Required for the import of the processed frataxin homolog YFH1 into the mitochondrion. In terms of biological role, acts as a non-catalytic component of endonuclease SceI (endo.SceI), which cleaves specifically at multiple sites on mitochondrial DNA and produces double-stranded breaks. SSC1 confers broader sequence specificity, greater stability, and higher activity on the catalytic subunit. This chain is Import motor subunit, mitochondrial, found in Saccharomyces cerevisiae (Baker's yeast).